Reading from the N-terminus, the 635-residue chain is Threonine--tRNA ligase (635 aa).

A TGS domain is found at 1–61; it reads MTVVRLPDGT…EIDSDLVLIT (61 aa). Residues 242–533 form a catalytic region; sequence DHRKLGKQLD…LIEHHAGALP (292 aa). Zn(2+)-binding residues include C333, H384, and H510.

The protein belongs to the class-II aminoacyl-tRNA synthetase family. In terms of assembly, homodimer. Requires Zn(2+) as cofactor.

The protein resides in the cytoplasm. The enzyme catalyses tRNA(Thr) + L-threonine + ATP = L-threonyl-tRNA(Thr) + AMP + diphosphate + H(+). Catalyzes the attachment of threonine to tRNA(Thr) in a two-step reaction: L-threonine is first activated by ATP to form Thr-AMP and then transferred to the acceptor end of tRNA(Thr). Also edits incorrectly charged L-seryl-tRNA(Thr). In Nitrosomonas eutropha (strain DSM 101675 / C91 / Nm57), this protein is Threonine--tRNA ligase.